A 610-amino-acid polypeptide reads, in one-letter code: NTPase KAP family P-loop domain-containing protein 1 (610 aa).

Positions 1–414 (MQQEAAQRES…NTVPITVRLL (414 aa)) constitute a KAP NTPase domain. The next 3 membrane-spanning stretches (helical) occupy residues 22 to 42 (AVSG…QPII), 118 to 138 (VCLG…LLYL), and 157 to 177 (VFGG…VYSV). The segment at 540–587 (ALKPPSPPKSPTRDTPHAAHRANSASRAPPSGRASGQAGEGHHTGDLA) is disordered. Positions 560–575 (RANSASRAPPSGRASG) are enriched in low complexity.

Its subcellular location is the membrane. The chain is NTPase KAP family P-loop domain-containing protein 1 (NKPD1) from Homo sapiens (Human).